A 528-amino-acid polypeptide reads, in one-letter code: MTVDALTQPHHLLSLAWNDTQQHGSWFAPLVTTSAGLLCLLLYLCSSGRRSELPVFNPKTWWELTTMRAKRDFDANAPSWIESWFSQNDKPIRFIVDSGYCTILPSSMADEFRKMKELCMYKFLGTDFHSHLPGFDGFKEVTRDAHLITKVVMNQFQTQAPKYVKPLANEASGIITDIFGDSNEWHTVPVYNQCLDLVTRTVTFIMVGSKLAHNEEWLDIAKHHAVTMAIQARQLRLWPVILRPLVHWLEPQGAKLRAQVRRARQLLDPIIQERRAERDSCLAKGIEPPRYVDSIQWFEDTAKGKWYDAAGAQLAMDFAGIYGTSDLLIGGLVDIVRHPHLLEPLRDEIRTVIGQGGWTPASLYKLKLLDSCLKESQRVKPVECATMRSYALQDVTFSNGTFIPKGELVAVAADRMSNPEVWPEPAKYDPYRYMRLREDPAKAFSAQLENTNGDHIGFGWHPRACPGRFFASKEIKMMLAYLLIRYDWKVVPNEPLQYYRHSFSVRIHPTTKLMMRRRDEDIRLPGSL.

Over 1–23 (MTVDALTQPHHLLSLAWNDTQQH) the chain is Cytoplasmic. The chain crosses the membrane as a helical; Signal-anchor for type II membrane protein span at residues 24-44 (GSWFAPLVTTSAGLLCLLLYL). Topologically, residues 45–528 (CSSGRRSELP…DEDIRLPGSL (484 aa)) are lumenal. N399 is a glycosylation site (N-linked (GlcNAc...) asparagine). C465 is a heme binding site.

Belongs to the cytochrome P450 family. It depends on heme as a cofactor.

The protein localises to the membrane. The protein resides in the endoplasmic reticulum membrane. It catalyses the reaction dihydromonacolin L carboxylate + reduced [NADPH--hemoprotein reductase] + O2 = monacolin L carboxylate + oxidized [NADPH--hemoprotein reductase] + 2 H2O + H(+). The enzyme catalyses monacolin L carboxylate + reduced [NADPH--hemoprotein reductase] + O2 = monacolin J carboxylate + oxidized [NADPH--hemoprotein reductase] + H2O + H(+). The protein operates within polyketide biosynthesis; lovastatin biosynthesis. Its function is as follows. Dihydromonacolin L monooxygenase; part of the gene cluster that mediates the biosynthesis of lovastatin (also known as mevinolin, mevacor or monacolin K), a hypolipidemic inhibitor of (3S)-hydroxymethylglutaryl-coenzyme A (HMG-CoA) reductase (HMGR). The first step in the biosynthesis of lovastatin is the production of dihydromonacolin L acid by the lovastatin nonaketide synthase lovB and the trans-acting enoyl reductase lovC via condensation of one acetyl-CoA unit and 8 malonyl-CoA units. Dihydromonacolin L acid is released from lovB by the thioesterase lovG. Next, dihydromonacolin L acid is oxidized by the dihydromonacolin L monooxygenase lovA twice to form monacolin J acid. The 2-methylbutyrate moiety of lovastatin is synthesized by the lovastatin diketide synthase lovF via condensation of one acetyl-CoA unit and one malonyl-CoA unit. Finally, the covalent attachment of this moiety to monacolin J acid is catalyzed by the transesterase lovD to yield lovastatin. LovD has broad substrate specificity and can also convert monacolin J to simvastatin using alpha-dimethylbutanoyl-S-methyl-3-mercaptopropionate (DMB-S-MMP) as the thioester acyl donor, and can also catalyze the reverse reaction and function as hydrolase in vitro. LovD has much higher activity with LovF-bound 2-methylbutanoate than with free diketide substrates. This chain is Dihydromonacolin L monooxygenase LovA, found in Aspergillus terreus (strain NIH 2624 / FGSC A1156).